Here is a 308-residue protein sequence, read N- to C-terminus: MGSVKIGTRDSQLALWQAEWVKRKLEEYYPEREFVLVPMKTKGDKILDVPLAKIGDKGLFTKELEVGLLNGEIDCAVHSLKDLPTVLPPGLEIAAFCEREEPRDVFLSKDGTPLGSLPAGSIIGTSSLRRKAQLQNYRSDLSFADLRGNLQTRWRKLQESDMAGIVLAAAGVKRLGWEDRITEYISEEIMLSAVGQGAIAVEIAAQRADVREMLDLLNHGDTERAVKAERALLYRLEGGCQIPIGAWAVTEQQQIVLKGMVASLDGQRILKVTLSGEHPEELGRQAADLLIAQGALEILQEIRTPLEK.

Cys-240 is subject to S-(dipyrrolylmethanemethyl)cysteine.

Belongs to the HMBS family. In terms of assembly, monomer. Dipyrromethane is required as a cofactor.

It catalyses the reaction 4 porphobilinogen + H2O = hydroxymethylbilane + 4 NH4(+). It participates in porphyrin-containing compound metabolism; protoporphyrin-IX biosynthesis; coproporphyrinogen-III from 5-aminolevulinate: step 2/4. Tetrapolymerization of the monopyrrole PBG into the hydroxymethylbilane pre-uroporphyrinogen in several discrete steps. This Desulfitobacterium hafniense (strain DSM 10664 / DCB-2) protein is Porphobilinogen deaminase.